Here is a 208-residue protein sequence, read N- to C-terminus: UPF0316 protein SERP1448 (208 aa).

3 consecutive transmembrane segments (helical) span residues 8–28 (PWLM…FLTM), 40–60 (VAAV…GLVM), and 66–86 (IQNI…GMKI).

It belongs to the UPF0316 family.

The protein resides in the cell membrane. The sequence is that of UPF0316 protein SERP1448 from Staphylococcus epidermidis (strain ATCC 35984 / DSM 28319 / BCRC 17069 / CCUG 31568 / BM 3577 / RP62A).